A 535-amino-acid chain; its full sequence is Intercellular adhesion molecule 1 (535 aa).

The N-terminal stretch at M1–A27 is a signal peptide. Topologically, residues G28 to L480 are extracellular. An Ig-like C2-type 1 domain is found at G41–A102. An N-linked (GlcNAc...) asparagine glycan is attached at N47. Intrachain disulfides connect C48/C91 and C52/C95. N-linked (GlcNAc...) asparagine glycans are attached at residues N105 and N131. In terms of domain architecture, Ig-like C2-type 2 spans G127–R193. C134 and C186 are joined by a disulfide. A Cell attachment site; atypical motif is present at residues R151 to E153. N-linked (GlcNAc...) asparagine glycans are attached at residues N183, N202, N236, N262, N302, N341, N357, N366, N404, and N428. The 66-residue stretch at G230–V295 folds into the Ig-like C2-type 3 domain. C237 and C288 are oxidised to a cystine. The 54-residue stretch at W323–A376 folds into the Ig-like C2-type 4 domain. 4 cysteine pairs are disulfide-bonded: C330–C369, C401–C417, C417–C456, and C429–C456. The 54-residue stretch at G410 to G463 folds into the Ig-like C2-type 5 domain. The helical transmembrane segment at D481–Y503 threads the bilayer. The Cytoplasmic segment spans residues N504 to P535. A Phosphothreonine modification is found at T533.

It belongs to the immunoglobulin superfamily. ICAM family. Homodimer. Interacts with MUC1 and promotes cell aggregation in epithelial cells. Interacts with ARHGEF26/SGEF. Interacts (on T cell side) with CD81, CD247 and CD9 at immunological synapses between antigen-presenting cells and T cells. Post-translationally, monoubiquitinated, which is promoted by MARCH9 and leads to endocytosis.

The protein localises to the membrane. ICAM proteins are ligands for the leukocyte adhesion protein LFA-1 (integrin alpha-L/beta-2). During leukocyte trans-endothelial migration, ICAM1 engagement promotes the assembly of endothelial apical cups through ARHGEF26/SGEF and RHOG activation. The sequence is that of Intercellular adhesion molecule 1 (ICAM1) from Bos taurus (Bovine).